The sequence spans 395 residues: Tyrosine--tRNA ligase 2 (395 aa).

The 'HIGH' region motif lies at 42–51 (PTAPDIHLGH). The short motif at 226–230 (KMSKS) is the 'KMSKS' region element. K229 lines the ATP pocket. The 62-residue stretch at 334–395 (TPMANLLKEA…KRKFARITIA (62 aa)) folds into the S4 RNA-binding domain.

It belongs to the class-I aminoacyl-tRNA synthetase family. TyrS type 2 subfamily. As to quaternary structure, homodimer.

The protein localises to the cytoplasm. The enzyme catalyses tRNA(Tyr) + L-tyrosine + ATP = L-tyrosyl-tRNA(Tyr) + AMP + diphosphate + H(+). In terms of biological role, catalyzes the attachment of tyrosine to tRNA(Tyr) in a two-step reaction: tyrosine is first activated by ATP to form Tyr-AMP and then transferred to the acceptor end of tRNA(Tyr). In Vibrio vulnificus (strain CMCP6), this protein is Tyrosine--tRNA ligase 2.